Consider the following 501-residue polypeptide: Zinc-binding lipoprotein AdcA (501 aa).

An N-terminal signal peptide occupies residues 1-18 (MKKISLLLASLCALFLVA). A lipid anchor (N-palmitoyl cysteine) is attached at cysteine 19. Cysteine 19 carries S-diacylglycerol cysteine lipidation. Residue histidine 63 participates in Zn(2+) binding. The segment at 116-136 (LPGGEEEEGDHDHGEEGHHHE) is disordered. Residues 120 to 136 (EEEEGDHDHGEEGHHHE) form a his-rich loop region. Residues 125–136 (DHDHGEEGHHHE) are compositionally biased toward basic and acidic residues. Residues histidine 140, histidine 204, and glutamate 279 each coordinate Zn(2+).

This sequence belongs to the bacterial solute-binding protein 9 family.

It localises to the cell membrane. Functionally, part of the ATP-binding cassette (ABC) transport system AdcABC involved in zinc import. Binds zinc with high affinity and specificity and delivers it to the membrane permease for translocation into the cytoplasm. Required for transformability. This chain is Zinc-binding lipoprotein AdcA (adcA), found in Streptococcus pneumoniae (strain ATCC BAA-255 / R6).